Consider the following 202-residue polypeptide: MAKVSVLNVAVLENPSPFHSPFRFEISFECNEALADDLEWKIIYVGSAESEEFDQILDSVLVGPVPAGRHMFVFQADAPNPSLIPETDAVGVTVVLITCTYHGQEFIRVGYYVNNEYLSPELRENPPLKPDFSQLQRNILASNPRVTRFHINWDNNMDRLEAIENQDSSLGCGLPLSCTPIKGLGLPSCIPGLLPENSMDCI.

An interaction with histone H3 and CHAF1B region spans residues 1 to 156 (MAKVSVLNVA…TRFHINWDNN (156 aa)). Phosphoserine; by TLK2 is present on Ser198.

This sequence belongs to the ASF1 family. Interacts with histone H3 (via C-terminus), including histone H3.1, H3.2 and H3.3, and histone H4; the interaction with H3 is direct. Interacts with the CHAF1A, CHAF1B and RBBP4 subunits of the CAF-1 complex. Interacts with HAT1, NASP and TAF1. Found in a soluble complex with NASP and histones H3 and H4; the interaction with NASP is probably indirect and mediated by H3-H4. Interacts with CDAN1. Found in a cytosolic complex with CDAN1, ASF1A, IPO4 and histones H3.1 and H4. Interacts with CREBBP. Post-translationally, phosphorylated by TLK1 and TLK2.

The protein localises to the nucleus. It is found in the cytoplasm. It localises to the cytosol. Its function is as follows. Histone chaperone that facilitates histone deposition and histone exchange and removal during nucleosome assembly and disassembly. Cooperates with chromatin assembly factor 1 (CAF-1) to promote replication-dependent chromatin assembly. Also involved in the nuclear import of the histone H3-H4 dimer together with importin-4 (IPO4): specifically recognizes and binds newly synthesized histones with the monomethylation of H3 'Lys-9' (H3K9me1) and diacetylation at 'Lys-5' and 'Lys-12' of H4 (H4K5ac and H4K12ac) marks in the cytosol. Does not participate in replication-independent nucleosome deposition which is mediated by ASF1A and HIRA. Required for gonad development. The sequence is that of Histone chaperone ASF1B (ASF1B) from Bos taurus (Bovine).